Consider the following 552-residue polypeptide: Dihydroxy-acid dehydratase (552 aa).

Cys-46 contributes to the [2Fe-2S] cluster binding site. Position 78 (Asp-78) interacts with Mg(2+). Cys-119 contacts [2Fe-2S] cluster. Residues Asp-120 and Lys-121 each coordinate Mg(2+). Lys-121 bears the N6-carboxylysine mark. Position 191 (Cys-191) interacts with [2Fe-2S] cluster. Glu-442 serves as a coordination point for Mg(2+). The Proton acceptor role is filled by Ser-468.

It belongs to the IlvD/Edd family. In terms of assembly, homodimer. Requires [2Fe-2S] cluster as cofactor. The cofactor is Mg(2+).

It carries out the reaction (2R)-2,3-dihydroxy-3-methylbutanoate = 3-methyl-2-oxobutanoate + H2O. The catalysed reaction is (2R,3R)-2,3-dihydroxy-3-methylpentanoate = (S)-3-methyl-2-oxopentanoate + H2O. It functions in the pathway amino-acid biosynthesis; L-isoleucine biosynthesis; L-isoleucine from 2-oxobutanoate: step 3/4. The protein operates within amino-acid biosynthesis; L-valine biosynthesis; L-valine from pyruvate: step 3/4. In terms of biological role, functions in the biosynthesis of branched-chain amino acids. Catalyzes the dehydration of (2R,3R)-2,3-dihydroxy-3-methylpentanoate (2,3-dihydroxy-3-methylvalerate) into 2-oxo-3-methylpentanoate (2-oxo-3-methylvalerate) and of (2R)-2,3-dihydroxy-3-methylbutanoate (2,3-dihydroxyisovalerate) into 2-oxo-3-methylbutanoate (2-oxoisovalerate), the penultimate precursor to L-isoleucine and L-valine, respectively. The sequence is that of Dihydroxy-acid dehydratase from Picrophilus torridus (strain ATCC 700027 / DSM 9790 / JCM 10055 / NBRC 100828 / KAW 2/3).